Consider the following 76-residue polypeptide: Beta-defensin 121 (76 aa).

A signal peptide spans 1–15 (MKLLLLLLTVTLLLA). 3 cysteine pairs are disulfide-bonded: C23–C50, C30–C44, and C34–C51.

This sequence belongs to the beta-defensin family.

The protein resides in the secreted. Functionally, has antibacterial activity. The protein is Beta-defensin 121 (DEFB121) of Pan troglodytes (Chimpanzee).